A 773-amino-acid polypeptide reads, in one-letter code: Acyl-homoserine lactone acylase PvdQ (773 aa).

Residues 1 to 23 (MSRALPGFLFAGLSVAVVLPAQA) form the signal peptide. Positions 200-221 (SQQVQALQLAAARNERFALERG) are cleaved as a propeptide — spacer peptide. Residue Ser222 is the Nucleophile of the active site.

Belongs to the peptidase S45 family. As to quaternary structure, heterodimer of an alpha subunit and a beta subunit processed from the same precursor.

Its subcellular location is the periplasm. It catalyses the reaction an N-acyl-L-homoserine lactone + H2O = L-homoserine lactone + a carboxylate. Catalyzes the deacylation of acyl-homoserine lactone (AHL or acyl-HSL), releasing homoserine lactone (HSL) and the corresponding fatty acid. Possesses a specificity for the degradation of long-chain acyl-HSLs (side chains of 11 to 14 carbons in length). In Pseudomonas syringae pv. tomato (strain ATCC BAA-871 / DC3000), this protein is Acyl-homoserine lactone acylase PvdQ (pvdQ).